Consider the following 298-residue polypeptide: Syntaxin-125 (298 aa).

Position 1 is an N-acetylmethionine (M1). Residues 1 to 274 (MNDLFSNSFK…KSSRKWTCYA (274 aa)) are Cytoplasmic-facing. Residues 25-155 (TMNLDKFFED…NEYKETVERR (131 aa)) are a coiled coil. Residues 198–260 (ISEIQERHDA…RRGTDQLQDA (63 aa)) enclose the t-SNARE coiled-coil homology domain. A helical; Anchor for type IV membrane protein transmembrane segment spans residues 275-295 (IILFIVIFILLLIPLLPHIML). The Vesicular portion of the chain corresponds to 296–298 (MLK).

The protein belongs to the syntaxin family. Part of the t-SNARE complex.

The protein resides in the membrane. In terms of biological role, vesicle trafficking protein that functions in the secretory pathway. The sequence is that of Syntaxin-125 (SYP125) from Arabidopsis thaliana (Mouse-ear cress).